We begin with the raw amino-acid sequence, 360 residues long: UPF0283 membrane protein Oant_2119 (360 aa).

A disordered region spans residues 1 to 30 (MTEKTPRKPASFTVSQASNRPEAADEAPRR). The next 2 membrane-spanning stretches (helical) occupy residues 77-97 (ILFG…TEDL) and 108-128 (LGWT…AIVV).

The protein belongs to the UPF0283 family.

The protein resides in the cell inner membrane. The chain is UPF0283 membrane protein Oant_2119 from Brucella anthropi (strain ATCC 49188 / DSM 6882 / CCUG 24695 / JCM 21032 / LMG 3331 / NBRC 15819 / NCTC 12168 / Alc 37) (Ochrobactrum anthropi).